Reading from the N-terminus, the 803-residue chain is Exo-1,4-beta-xylosidase xlnD (803 aa).

The signal sequence occupies residues 1–18 (MRSLISVAVLSALPTAFS). N-linked (GlcNAc...) asparagine glycans are attached at residues Asn-21, Asn-44, Asn-85, Asn-122, Asn-140, and Asn-234. Asp-307 is a catalytic residue. Asn-437, Asn-474, Asn-515, Asn-611, Asn-676, and Asn-698 each carry an N-linked (GlcNAc...) asparagine glycan.

It belongs to the glycosyl hydrolase 3 family.

It is found in the secreted. The catalysed reaction is Hydrolysis of (1-&gt;4)-beta-D-xylans, to remove successive D-xylose residues from the non-reducing termini.. It participates in glycan degradation; xylan degradation. Xylan 1,4-beta-xylosidase involved in the hydrolysis of xylan, a major structural heterogeneous polysaccharide found in plant biomass representing the second most abundant polysaccharide in the biosphere, after cellulose. The sequence is that of Exo-1,4-beta-xylosidase xlnD (xlnD) from Emericella nidulans (strain FGSC A4 / ATCC 38163 / CBS 112.46 / NRRL 194 / M139) (Aspergillus nidulans).